The sequence spans 409 residues: uncharacterized protein (409 aa).

A run of 10 helical transmembrane segments spans residues 62–82 (FSLG…WVWI), 100–120 (LLLF…PEAF), 123–143 (MGLL…LFAL), 152–172 (ASFM…TFWI), 183–203 (VVLW…RYWV), 252–272 (GTPW…WIYF), 293–313 (AQYL…FTAV), 328–348 (YNFA…TMWM), 355–375 (VLPY…TLVP), and 376–396 (FVAN…VAVW).

The protein resides in the cell membrane. This is an uncharacterized protein from Rhizobium meliloti (strain 1021) (Ensifer meliloti).